The primary structure comprises 837 residues: PE-PGRS family protein PE_PGRS4 (837 aa).

Residues 4–94 (VIAAPEVIAA…GAYAAAEAAA (91 aa)) form the PE domain. Residues 811–825 (NGGKAGGTPGAGGTS) are compositionally biased toward gly residues. A disordered region spans residues 811–837 (NGGKAGGTPGAGGTSGLIIGENGLNGL). Residues 826 to 837 (GLIIGENGLNGL) are compositionally biased toward low complexity.

This sequence belongs to the mycobacterial PE family. PGRS subfamily.

The polypeptide is PE-PGRS family protein PE_PGRS4 (Mycobacterium tuberculosis (strain ATCC 25618 / H37Rv)).